The chain runs to 223 residues: Transcriptional regulatory protein PhoP (223 aa).

The Response regulatory domain occupies Arg-2–Met-116. Position 51 is a 4-aspartylphosphate (Asp-51). The segment at residues Ser-124–Leu-222 is a DNA-binding region (ompR/PhoB-type).

In terms of assembly, monomer in the inactive, unphosphorylated state and dimer in the active, phosphorylated state. Post-translationally, phosphorylated by PhoQ.

The protein resides in the cytoplasm. With respect to regulation, feedback inhibited by MgrB, which seems to bind PhoQ, altering its activity and that of downstream effector PhoP. PhoP-regulated transcription is redox-sensitive, being activated when the periplasm becomes more reducing (deletion of dsbA/dsbB, or treatment with dithiothreitol). MgrB acts between DsbA/DsbB and PhoP/PhoQ in this pathway. In terms of biological role, member of the two-component regulatory system PhoP/PhoQ involved in adaptation to low Mg(2+) environments and the control of acid resistance genes. In low periplasmic Mg(2+), PhoQ phosphorylates PhoP, resulting in the expression of PhoP-activated genes (PAG) and repression of PhoP-repressed genes (PRG). In high periplasmic Mg(2+), PhoQ dephosphorylates phospho-PhoP, resulting in the repression of PAG and may lead to expression of some PRG. Mediates magnesium influx to the cytosol by activation of MgtA. Promotes expression of the two-component regulatory system rstA/rstB and transcription of the hemL, mgrB, nagA, slyB, vboR and yrbL genes. In Escherichia coli (strain K12), this protein is Transcriptional regulatory protein PhoP (phoP).